A 300-amino-acid chain; its full sequence is B1 kinase (300 aa).

The 267-residue stretch at 16–282 folds into the Protein kinase domain; it reads WVVGPLIGKG…ITMVNSLTYF (267 aa). Residues 22-30 and K45 contribute to the ATP site; that span reads IGKGGFGSI. The Proton acceptor role is filled by N147.

This sequence belongs to the protein kinase superfamily. Ser/Thr protein kinase family. Poxviruses subfamily. In terms of assembly, interacts with host JIP1; this interaction increases the amount of MAPK bound to JIP1 and subsequently increases the activity of transcription factors, such as JUN, that respond to these complexes. Interacts with protein OPG198; this interaction inhibits the repressive activity of OPG198 pseudokinase on viral replication factory formation. Requires Mg(2+) as cofactor. Autophosphorylated.

It is found in the virion. The protein resides in the host cytoplasm. It carries out the reaction L-seryl-[protein] + ATP = O-phospho-L-seryl-[protein] + ADP + H(+). The catalysed reaction is L-threonyl-[protein] + ATP = O-phospho-L-threonyl-[protein] + ADP + H(+). Essential serine/threonine-protein kinase that plays different role in the viral life cycle. Phosphorylates the host small ribosomal protein RACK1 thereby customizing the ribosomes to a state optimal for viral mRNAs (which contain poly-A leaders) but not for host mRNAs. Facilitates viral DNA replication by inhibiting host BANF1, a cellular host defense responsive to foreign DNA. Phosphorylates host BANF1 on serine and threonine residues; this leads to BANF1 relocalization to the cytoplasm, loss of dimerization and impaired DNA binding activity. Indeed, BANF1 activity depends on its DNA-binding property which is blocked by VPK1-mediated phosphorylation. Required for viral intermediate genes expression, probably by inhibiting host BANF1. Modulates cellular responses via host JUN by two different mechanisms, either by direct phosphorylation or by modulation of upstream JIP1-MAPK complexes. Seems to participate in the accumulation/processing of late proteins and thus in virion maturation. In addition, inhibits B12 repressive activity on viral DNA replication via a phosphorylation-dependent mechanism. This chain is B1 kinase (OPG187), found in Homo sapiens (Human).